Reading from the N-terminus, the 82-residue chain is Small ribosomal subunit protein bS16 (82 aa).

It belongs to the bacterial ribosomal protein bS16 family.

The polypeptide is Small ribosomal subunit protein bS16 (Caldanaerobacter subterraneus subsp. tengcongensis (strain DSM 15242 / JCM 11007 / NBRC 100824 / MB4) (Thermoanaerobacter tengcongensis)).